The sequence spans 172 residues: Adenine phosphoribosyltransferase (172 aa).

The protein belongs to the purine/pyrimidine phosphoribosyltransferase family. In terms of assembly, homodimer.

The protein localises to the cytoplasm. It carries out the reaction AMP + diphosphate = 5-phospho-alpha-D-ribose 1-diphosphate + adenine. Its pathway is purine metabolism; AMP biosynthesis via salvage pathway; AMP from adenine: step 1/1. Functionally, catalyzes a salvage reaction resulting in the formation of AMP, that is energically less costly than de novo synthesis. The chain is Adenine phosphoribosyltransferase from Polynucleobacter necessarius subsp. necessarius (strain STIR1).